A 282-amino-acid chain; its full sequence is Shikimate dehydrogenase (NADP(+)) (282 aa).

Shikimate is bound by residues 18-20 and T65; that span reads SRS. Catalysis depends on K69, which acts as the Proton acceptor. E81 is a binding site for NADP(+). The shikimate site is built by N90 and D105. NADP(+) is bound by residues 130–134, 154–159, and M222; these read GAGGA and NRTPAR. Position 224 (Y224) interacts with shikimate. NADP(+) is bound at residue G245.

Belongs to the shikimate dehydrogenase family. In terms of assembly, homodimer.

The catalysed reaction is shikimate + NADP(+) = 3-dehydroshikimate + NADPH + H(+). It functions in the pathway metabolic intermediate biosynthesis; chorismate biosynthesis; chorismate from D-erythrose 4-phosphate and phosphoenolpyruvate: step 4/7. Functionally, involved in the biosynthesis of the chorismate, which leads to the biosynthesis of aromatic amino acids. Catalyzes the reversible NADPH linked reduction of 3-dehydroshikimate (DHSA) to yield shikimate (SA). The protein is Shikimate dehydrogenase (NADP(+)) of Acidovorax sp. (strain JS42).